Consider the following 442-residue polypeptide: Serine--tRNA ligase (442 aa).

T249–E251 provides a ligand contact to L-serine. R280–E282 lines the ATP pocket. An L-serine-binding site is contributed by E303. An ATP-binding site is contributed by E367 to S370. S402 lines the L-serine pocket.

Belongs to the class-II aminoacyl-tRNA synthetase family. Type-1 seryl-tRNA synthetase subfamily. In terms of assembly, homodimer. The tRNA molecule binds across the dimer.

Its subcellular location is the cytoplasm. The enzyme catalyses tRNA(Ser) + L-serine + ATP = L-seryl-tRNA(Ser) + AMP + diphosphate + H(+). The catalysed reaction is tRNA(Sec) + L-serine + ATP = L-seryl-tRNA(Sec) + AMP + diphosphate + H(+). It functions in the pathway aminoacyl-tRNA biosynthesis; selenocysteinyl-tRNA(Sec) biosynthesis; L-seryl-tRNA(Sec) from L-serine and tRNA(Sec): step 1/1. Its function is as follows. Catalyzes the attachment of serine to tRNA(Ser). Is also able to aminoacylate tRNA(Sec) with serine, to form the misacylated tRNA L-seryl-tRNA(Sec), which will be further converted into selenocysteinyl-tRNA(Sec). This Acidovorax sp. (strain JS42) protein is Serine--tRNA ligase.